The primary structure comprises 476 residues: RNA-splicing ligase RtcB homolog (476 aa).

Mn(2+) contacts are provided by Asp-90, Cys-93, His-198, His-230, and His-324. 197–201 (NHYAE) is a binding site for GMP. GMP is bound by residues 324 to 325 (HN), 373 to 376 (GGTM), Ser-380, 399 to 402 (HGAG), and Lys-475. His-399 serves as the catalytic GMP-histidine intermediate.

The protein belongs to the RtcB family. As to quaternary structure, catalytic component of the tRNA-splicing ligase complex. Mn(2+) is required as a cofactor.

The catalysed reaction is a 3'-end 3'-phospho-ribonucleotide-RNA + a 5'-end dephospho-ribonucleoside-RNA + GTP = a ribonucleotidyl-ribonucleotide-RNA + GMP + diphosphate. The enzyme catalyses a 3'-end 2',3'-cyclophospho-ribonucleotide-RNA + a 5'-end dephospho-ribonucleoside-RNA + GTP + H2O = a ribonucleotidyl-ribonucleotide-RNA + GMP + diphosphate + H(+). Functionally, catalytic subunit of the tRNA-splicing ligase complex that acts by directly joining spliced tRNA halves to mature-sized tRNAs by incorporating the precursor-derived splice junction phosphate into the mature tRNA as a canonical 3',5'-phosphodiester. May act as an RNA ligase with broad substrate specificity, and may function toward other RNAs. The chain is RNA-splicing ligase RtcB homolog from Chlamydomonas reinhardtii (Chlamydomonas smithii).